The chain runs to 166 residues: MKLSTKVTELTNIIAPAVAACDVALWGIEFAPQGNRSLLRIYIEALPEEQAQNKQVTIENCAAVNHQVSGILEVHDPIAGEFILEVSSPGFDRAFFSDEQMHAYVGQTVSLRLIQAIGEGDKKRRKATGTLNSIDGTSLKLTATDGEQFEIALSNIDKANLIYEDA.

Belongs to the RimP family.

It localises to the cytoplasm. In terms of biological role, required for maturation of 30S ribosomal subunits. The sequence is that of Ribosome maturation factor RimP from Psychrobacter arcticus (strain DSM 17307 / VKM B-2377 / 273-4).